The sequence spans 626 residues: Hormonally up-regulated neu tumor-associated kinase homolog B (626 aa).

ATP contacts are provided by residues 1 to 2 (KV) and lysine 17. The 246-residue stretch at 1–246 (KVREGLHVGT…IQQALANRWL (246 aa)) folds into the Protein kinase domain. The active-site Proton acceptor is the aspartate 112. Residues 336–357 (KYKMNKNSYEERRSKDLEKRGE) show a composition bias toward basic and acidic residues. 3 disordered regions span residues 336-407 (KYKM…ESFG), 477-574 (VNRE…RSRG), and 590-615 (QVVS…PGYA). Over residues 374 to 390 (SHRQSTCLTPQGHSSSK) the composition is skewed to polar residues. The span at 392–405 (PIKERRSSKSERES) shows a compositional bias: basic and acidic residues. Residues 518-532 (DNTSPLKGHSNQASF) show a composition bias toward polar residues. Positions 539–555 (SPSSPESMSPTSPHSPS) are enriched in low complexity. The span at 556 to 566 (CNNNISGNLGS) shows a compositional bias: polar residues.

It belongs to the protein kinase superfamily. CAMK Ser/Thr protein kinase family. SNF1 subfamily. In terms of tissue distribution, in the egg, expressed predominantly in the animal hemisphere. This pattern of expression persists throughout the cleavage and blastula stages. At the gastrula stage, expression is restricted to the ectoderm. In later-stage embryos, expressed over the entire embryonic surface including the open neural plate at stage 15 and the neural tube at stage 22. In tadpoles, strongly expressed in the neural tube, motor neurons, brain regions and sensory organs (otic vesicle and eye). Also expressed in the perisomitic mesoderm, brachial arches and embryonic epidermis of tadpoles.

It catalyses the reaction L-seryl-[protein] + ATP = O-phospho-L-seryl-[protein] + ADP + H(+). It carries out the reaction L-threonyl-[protein] + ATP = O-phospho-L-threonyl-[protein] + ADP + H(+). In Xenopus laevis (African clawed frog), this protein is Hormonally up-regulated neu tumor-associated kinase homolog B (hunk-b).